The sequence spans 109 residues: Thiosulfate sulfurtransferase GlpE (109 aa).

The Rhodanese domain occupies 16 to 104 (RNAGAVIVDI…WRHTYPSDVE (89 aa)). Cys64 serves as the catalytic Cysteine persulfide intermediate.

Belongs to the GlpE family.

The protein resides in the cytoplasm. The catalysed reaction is thiosulfate + hydrogen cyanide = thiocyanate + sulfite + 2 H(+). It carries out the reaction thiosulfate + [thioredoxin]-dithiol = [thioredoxin]-disulfide + hydrogen sulfide + sulfite + 2 H(+). Functionally, transferase that catalyzes the transfer of sulfur from thiosulfate to thiophilic acceptors such as cyanide or dithiols. May function in a CysM-independent thiosulfate assimilation pathway by catalyzing the conversion of thiosulfate to sulfite, which can then be used for L-cysteine biosynthesis. The sequence is that of Thiosulfate sulfurtransferase GlpE from Stutzerimonas stutzeri (strain A1501) (Pseudomonas stutzeri).